A 141-amino-acid polypeptide reads, in one-letter code: UPF0310 protein SGO_1818 (141 aa).

This sequence belongs to the UPF0310 family.

The chain is UPF0310 protein SGO_1818 from Streptococcus gordonii (strain Challis / ATCC 35105 / BCRC 15272 / CH1 / DL1 / V288).